The sequence spans 466 residues: Carboxy-terminal processing protease CtpA (466 aa).

The N-terminal stretch at 1-36 is a signal peptide; the sequence is MKRQLKLFFIVLITAVVASALTLFITGNSSILGQKS. Positions 96 to 174 constitute a PDZ domain; sequence DETISASFEG…TKVKLELNRA (79 aa). Active-site charge relay system residues include S297, E308, and K322.

Belongs to the peptidase S41A family.

The enzyme catalyses The enzyme shows specific recognition of a C-terminal tripeptide, Xaa-Yaa-Zaa, in which Xaa is preferably Ala or Leu, Yaa is preferably Ala or Tyr, and Zaa is preferably Ala, but then cleaves at a variable distance from the C-terminus. A typical cleavage is -Ala-Ala-|-Arg-Ala-Ala-Lys-Glu-Asn-Tyr-Ala-Leu-Ala-Ala.. This is Carboxy-terminal processing protease CtpA (ctpA) from Bacillus subtilis (strain 168).